Here is a 233-residue protein sequence, read N- to C-terminus: 2,3-bisphosphoglycerate-dependent phosphoglycerate mutase (233 aa).

Residues 8 to 15, 21 to 22, Arg60, 87 to 90, Lys98, 114 to 115, and 183 to 184 contribute to the substrate site; these read RHGESEWN, TG, ERHY, RR, and GN. Residue His9 is the Tele-phosphohistidine intermediate of the active site. Glu87 acts as the Proton donor/acceptor in catalysis.

It belongs to the phosphoglycerate mutase family. BPG-dependent PGAM subfamily.

It catalyses the reaction (2R)-2-phosphoglycerate = (2R)-3-phosphoglycerate. Its pathway is carbohydrate degradation; glycolysis; pyruvate from D-glyceraldehyde 3-phosphate: step 3/5. Functionally, catalyzes the interconversion of 2-phosphoglycerate and 3-phosphoglycerate. In Lactococcus lactis subsp. cremoris (strain MG1363), this protein is 2,3-bisphosphoglycerate-dependent phosphoglycerate mutase.